A 98-amino-acid polypeptide reads, in one-letter code: Large ribosomal subunit protein uL23 (98 aa).

It belongs to the universal ribosomal protein uL23 family. In terms of assembly, part of the 50S ribosomal subunit. Contacts protein L29, and trigger factor when it is bound to the ribosome.

Its function is as follows. One of the early assembly proteins it binds 23S rRNA. One of the proteins that surrounds the polypeptide exit tunnel on the outside of the ribosome. Forms the main docking site for trigger factor binding to the ribosome. The sequence is that of Large ribosomal subunit protein uL23 from Gluconacetobacter diazotrophicus (strain ATCC 49037 / DSM 5601 / CCUG 37298 / CIP 103539 / LMG 7603 / PAl5).